A 707-amino-acid polypeptide reads, in one-letter code: Tryptophan synthase (707 aa).

Residues methionine 1–aspartate 297 form a tryptophan synthase alpha chain region. Catalysis depends on proton acceptor residues glutamate 50 and aspartate 61. The interval glutamate 298–alanine 707 is tryptophan synthase beta chain. Lysine 384 is modified (N6-(pyridoxal phosphate)lysine). Residues serine 540 and serine 683 each carry the phosphoserine modification.

The protein in the N-terminal section; belongs to the TrpA family. This sequence in the C-terminal section; belongs to the TrpB family. The cofactor is pyridoxal 5'-phosphate.

The enzyme catalyses (1S,2R)-1-C-(indol-3-yl)glycerol 3-phosphate + L-serine = D-glyceraldehyde 3-phosphate + L-tryptophan + H2O. The protein operates within amino-acid biosynthesis; L-tryptophan biosynthesis; L-tryptophan from chorismate: step 5/5. The protein is Tryptophan synthase (TRP5) of Saccharomyces cerevisiae (strain ATCC 204508 / S288c) (Baker's yeast).